The sequence spans 485 residues: Lysine--tRNA ligase (485 aa).

Mg(2+) is bound by residues glutamate 391 and glutamate 398.

The protein belongs to the class-II aminoacyl-tRNA synthetase family. As to quaternary structure, homodimer. The cofactor is Mg(2+).

The protein localises to the cytoplasm. The catalysed reaction is tRNA(Lys) + L-lysine + ATP = L-lysyl-tRNA(Lys) + AMP + diphosphate. The chain is Lysine--tRNA ligase from Blochmanniella floridana.